Here is a 541-residue protein sequence, read N- to C-terminus: Glucans biosynthesis protein D (541 aa).

The segment at residues 1–29 (MHRRNLLKASMAIAAYTGLSASGLLAAQA) is a signal peptide (tat-type signal).

Belongs to the OpgD/OpgG family. Post-translationally, predicted to be exported by the Tat system. The position of the signal peptide cleavage has not been experimentally proven.

It is found in the periplasm. The protein operates within glycan metabolism; osmoregulated periplasmic glucan (OPG) biosynthesis. Its function is as follows. Probably involved in the control of the structural glucose backbone of osmoregulated periplasmic glucans (OPGs). This chain is Glucans biosynthesis protein D, found in Pseudomonas fluorescens (strain SBW25).